The following is a 431-amino-acid chain: COBRA-like protein 4 (431 aa).

A signal peptide spans 1–20 (MRLLFSFCFFFFMIIFTATA). N-linked (GlcNAc...) asparagine glycans are attached at residues Asn-29, Asn-154, Asn-162, Asn-201, Asn-226, Asn-306, Asn-321, and Asn-340. A lipid anchor (GPI-anchor amidated asparagine) is attached at Asn-414. The propeptide at 415 to 431 (FASFSLTILLLLFISIW) is removed in mature form.

Belongs to the COBRA family. Expressed in roots, stems, leaves, flowers and siliques.

It is found in the cell membrane. In Arabidopsis thaliana (Mouse-ear cress), this protein is COBRA-like protein 4 (COBL4).